The following is a 46-amino-acid chain: Viscotoxin-1-PS (46 aa).

Intrachain disulfides connect Cys3/Cys40, Cys4/Cys32, and Cys16/Cys26.

The protein belongs to the plant thionin (TC 1.C.44) family.

It localises to the secreted. Thionins are small plant proteins which are toxic to animal cells. They seem to exert their toxic effect at the level of the cell membrane. Their precise function is not known. This is Viscotoxin-1-PS (THI2.4) from Viscum album (European mistletoe).